The following is a 189-amino-acid chain: Pyridoxal 5'-phosphate synthase subunit PdxT (189 aa).

G47 to S49 contacts L-glutamine. The active-site Nucleophile is the C79. L-glutamine-binding positions include R106 and I135–R136. Active-site charge relay system residues include H171 and E173.

This sequence belongs to the glutaminase PdxT/SNO family. In terms of assembly, in the presence of PdxS, forms a dodecamer of heterodimers. Only shows activity in the heterodimer.

The catalysed reaction is aldehydo-D-ribose 5-phosphate + D-glyceraldehyde 3-phosphate + L-glutamine = pyridoxal 5'-phosphate + L-glutamate + phosphate + 3 H2O + H(+). It carries out the reaction L-glutamine + H2O = L-glutamate + NH4(+). The protein operates within cofactor biosynthesis; pyridoxal 5'-phosphate biosynthesis. Its function is as follows. Catalyzes the hydrolysis of glutamine to glutamate and ammonia as part of the biosynthesis of pyridoxal 5'-phosphate. The resulting ammonia molecule is channeled to the active site of PdxS. The protein is Pyridoxal 5'-phosphate synthase subunit PdxT of Caldanaerobacter subterraneus subsp. tengcongensis (strain DSM 15242 / JCM 11007 / NBRC 100824 / MB4) (Thermoanaerobacter tengcongensis).